A 332-amino-acid polypeptide reads, in one-letter code: CMRF35-like molecule 1 (332 aa).

The signal sequence occupies residues 1–18; it reads MHLSLLALFLFWISGCFT. Topologically, residues 19–181 are extracellular; the sequence is AQDPVTGPEE…GDGNGFLDLS (163 aa). Residues 22–125 form the Ig-like V-type domain; sequence PVTGPEEVSG…YDHMFKVHVS (104 aa). Disulfide bonds link Cys-41-Cys-109 and Cys-55-Cys-63. Asn-89 carries N-linked (GlcNAc...) asparagine glycosylation. A helical membrane pass occupies residues 182 to 202; that stretch reads VLLPVISAALLLLLLVVSLIA. The Cytoplasmic portion of the chain corresponds to 203–332; that stretch reads WRMVRRQKKA…EYSSIRRPMP (130 aa). 2 disordered regions span residues 251-270 and 313-332; these read PRTS…KDHQ and PRTN…RPMP.

It belongs to the CD300 family. As to quaternary structure, interacts with PTPN6/SHP-1 in a tyrosine phosphorylation dependent manner. Interacts with IL4R. Phosphorylated on tyrosine.

Its subcellular location is the cell membrane. Functionally, acts as an inhibitory receptor for myeloid cells and mast cells. Positively regulates the phagocytosis of apoptotic cells (efferocytosis) via phosphatidylserine (PS) recognition; recognizes and binds PS as a ligand which is expressed on the surface of apoptotic cells. Plays an important role in the maintenance of immune homeostasis, by promoting macrophage-mediated efferocytosis and by inhibiting dendritic cell-mediated efferocytosis. Negatively regulates Fc epsilon receptor-dependent mast cell activation and allergic responses via binding to ceramide and sphingomyelin which act as ligands. May act as a coreceptor for interleukin 4 (IL-4). Associates with and regulates IL-4 receptor alpha-mediated responses by augmenting IL-4- and IL-13-induced signaling. Negatively regulates the Toll-like receptor (TLR) signaling mediated by MYD88 and TRIF through activation of PTPN6/SHP-1 and PTPN11/SHP-2. Inhibits osteoclast formation. Induces macrophage cell death upon engagement. The polypeptide is CMRF35-like molecule 1 (Cd300lf) (Rattus norvegicus (Rat)).